Here is an 89-residue protein sequence, read N- to C-terminus: Small ribosomal subunit protein uS15 (89 aa).

It belongs to the universal ribosomal protein uS15 family. As to quaternary structure, part of the 30S ribosomal subunit. Forms a bridge to the 50S subunit in the 70S ribosome, contacting the 23S rRNA.

One of the primary rRNA binding proteins, it binds directly to 16S rRNA where it helps nucleate assembly of the platform of the 30S subunit by binding and bridging several RNA helices of the 16S rRNA. Its function is as follows. Forms an intersubunit bridge (bridge B4) with the 23S rRNA of the 50S subunit in the ribosome. In Cereibacter sphaeroides (strain ATCC 17025 / ATH 2.4.3) (Rhodobacter sphaeroides), this protein is Small ribosomal subunit protein uS15.